Consider the following 233-residue polypeptide: Large ribosomal subunit protein uL1 (233 aa).

This sequence belongs to the universal ribosomal protein uL1 family. As to quaternary structure, part of the 50S ribosomal subunit.

Its function is as follows. Binds directly to 23S rRNA. The L1 stalk is quite mobile in the ribosome, and is involved in E site tRNA release. Functionally, protein L1 is also a translational repressor protein, it controls the translation of the L11 operon by binding to its mRNA. This Buchnera aphidicola subsp. Baizongia pistaciae (strain Bp) protein is Large ribosomal subunit protein uL1.